A 192-amino-acid chain; its full sequence is UPF0149 protein KPK_0755 (192 aa).

It belongs to the UPF0149 family.

The protein is UPF0149 protein KPK_0755 of Klebsiella pneumoniae (strain 342).